The following is a 438-amino-acid chain: MSYFPTVDKVIYEGPDSDSPLAFRHYDADKRVLGKPMREHLRMAACYWHTFVWPGADMFGVGTFKRPWQRAGDPMELAIGKAEAAFEFFSKLGIDYYSFHDTDVAPEGSSIKEYRNNFAQMVDRLERHQEQSGIKLLWGTANCFSNPRFAAGAASNPDPEVFAYAGAQVFSAMNATQRLKGSNYVLWGGREGYETLLNTDLKREREQLGRFMRMVVEHKHKIGFKGDLLIEPKPQEPTKHQYDYDSATVFGFLHQYGLQDEIKVNIEANHATLAGHSFHHEIATAVSLGIFGSIDANRGDPQNGWDTDQFPNSVEEMTLATYEILKAGGFTHGGYNFDSKVRRQSLDDVDLFHGHVAAMDVLALSLERAAAMVQNDKLQQFKDQRYAGWQQPFGQSVLSGGFSLASLAEHAFANELNPQAVSGRQELLEGVVNRFIYT.

Catalysis depends on residues histidine 100 and aspartate 103. Glutamate 231, glutamate 267, histidine 270, aspartate 295, aspartate 306, aspartate 308, and aspartate 338 together coordinate Mg(2+).

The protein belongs to the xylose isomerase family. As to quaternary structure, homotetramer. Mg(2+) serves as cofactor.

The protein localises to the cytoplasm. It carries out the reaction alpha-D-xylose = alpha-D-xylulofuranose. The chain is Xylose isomerase from Pseudomonas syringae pv. tomato (strain ATCC BAA-871 / DC3000).